A 214-amino-acid polypeptide reads, in one-letter code: Thymidylate kinase (214 aa).

Gly-10–Ser-17 is an ATP binding site.

The protein belongs to the thymidylate kinase family.

The enzyme catalyses dTMP + ATP = dTDP + ADP. Phosphorylation of dTMP to form dTDP in both de novo and salvage pathways of dTTP synthesis. In Brucella abortus (strain S19), this protein is Thymidylate kinase.